The sequence spans 329 residues: Porphobilinogen deaminase (329 aa).

An S-(dipyrrolylmethanemethyl)cysteine modification is found at Cys250.

This sequence belongs to the HMBS family. In terms of assembly, monomer. It depends on dipyrromethane as a cofactor.

It catalyses the reaction 4 porphobilinogen + H2O = hydroxymethylbilane + 4 NH4(+). Its pathway is porphyrin-containing compound metabolism; protoporphyrin-IX biosynthesis; coproporphyrinogen-III from 5-aminolevulinate: step 2/4. Its function is as follows. Tetrapolymerization of the monopyrrole PBG into the hydroxymethylbilane pre-uroporphyrinogen in several discrete steps. The chain is Porphobilinogen deaminase from Burkholderia thailandensis (strain ATCC 700388 / DSM 13276 / CCUG 48851 / CIP 106301 / E264).